The primary structure comprises 390 residues: Succinyl-diaminopimelate desuccinylase (390 aa).

Residue His-74 coordinates Zn(2+). Residue Asp-76 is part of the active site. Asp-107 contributes to the Zn(2+) binding site. Glu-140 acts as the Proton acceptor in catalysis. Zn(2+) contacts are provided by Glu-141, Glu-169, and His-363.

Belongs to the peptidase M20A family. DapE subfamily. In terms of assembly, homodimer. Zn(2+) is required as a cofactor. Co(2+) serves as cofactor.

The enzyme catalyses N-succinyl-(2S,6S)-2,6-diaminopimelate + H2O = (2S,6S)-2,6-diaminopimelate + succinate. The protein operates within amino-acid biosynthesis; L-lysine biosynthesis via DAP pathway; LL-2,6-diaminopimelate from (S)-tetrahydrodipicolinate (succinylase route): step 3/3. Catalyzes the hydrolysis of N-succinyl-L,L-diaminopimelic acid (SDAP), forming succinate and LL-2,6-diaminopimelate (DAP), an intermediate involved in the bacterial biosynthesis of lysine and meso-diaminopimelic acid, an essential component of bacterial cell walls. This Bartonella henselae (strain ATCC 49882 / DSM 28221 / CCUG 30454 / Houston 1) (Rochalimaea henselae) protein is Succinyl-diaminopimelate desuccinylase.